The sequence spans 167 residues: uncharacterized protein (167 aa).

Transmembrane regions (helical) follow at residues 13-33 (LIYL…TWLI), 37-57 (VLAV…FLPY), 61-81 (WFAL…KIGE), and 103-123 (LLLI…LVPS).

It localises to the cell membrane. This is an uncharacterized protein from Haemophilus influenzae (strain ATCC 51907 / DSM 11121 / KW20 / Rd).